Consider the following 264-residue polypeptide: Cell division protein DivIB (264 aa).

The Cytoplasmic portion of the chain corresponds to 1–23 (MAVYEERIPQVKQQRPRRRGNRK). Residues 24-44 (LVFLLVLFFLTILIIVFIRSP) traverse the membrane as a helical segment. Residues 45-264 (YSKVQEIRVT…GQEQPQQPQQ (220 aa)) are Extracellular-facing. The POTRA domain occupies 46–114 (SKVQEIRVTG…GLITLHITEQ (69 aa)).

The protein belongs to the FtsQ/DivIB family. DivIB subfamily.

It is found in the cell membrane. Its function is as follows. Cell division protein that may be involved in stabilizing or promoting the assembly of the division complex. This Brevibacillus brevis (strain 47 / JCM 6285 / NBRC 100599) protein is Cell division protein DivIB.